Here is a 126-residue protein sequence, read N- to C-terminus: Large ribosomal subunit protein bL12 (126 aa).

It belongs to the bacterial ribosomal protein bL12 family. Homodimer. Part of the ribosomal stalk of the 50S ribosomal subunit. Forms a multimeric L10(L12)X complex, where L10 forms an elongated spine to which 2 to 4 L12 dimers bind in a sequential fashion. Binds GTP-bound translation factors.

Forms part of the ribosomal stalk which helps the ribosome interact with GTP-bound translation factors. Is thus essential for accurate translation. In Teredinibacter turnerae (strain ATCC 39867 / T7901), this protein is Large ribosomal subunit protein bL12.